The primary structure comprises 334 residues: N-acetyl-gamma-glutamyl-phosphate reductase (334 aa).

The active site involves cysteine 145. Positions 173-192 are disordered; sequence GISGSGQDPTEGTHYPNVTQ.

It belongs to the NAGSA dehydrogenase family. Type 1 subfamily.

It is found in the cytoplasm. The catalysed reaction is N-acetyl-L-glutamate 5-semialdehyde + phosphate + NADP(+) = N-acetyl-L-glutamyl 5-phosphate + NADPH + H(+). Its pathway is amino-acid biosynthesis; L-arginine biosynthesis; N(2)-acetyl-L-ornithine from L-glutamate: step 3/4. In terms of biological role, catalyzes the NADPH-dependent reduction of N-acetyl-5-glutamyl phosphate to yield N-acetyl-L-glutamate 5-semialdehyde. This Methanocella arvoryzae (strain DSM 22066 / NBRC 105507 / MRE50) protein is N-acetyl-gamma-glutamyl-phosphate reductase.